A 97-amino-acid polypeptide reads, in one-letter code: Antitoxin TacA2 (97 aa).

It belongs to the TacA antitoxin family. Homodimer. Forms a complex with cognate toxin TacT2.

Its function is as follows. Antitoxin component of a type II toxin-antitoxin (TA) system. Counteracts the toxic effect of cognate toxin TacT2. The TacA2-TacT2 complex both represses and derepresses expression of its own operon. This Salmonella enteritidis protein is Antitoxin TacA2.